The chain runs to 250 residues: Peptidyl-tRNA hydrolase (250 aa).

Tyr-14 lines the tRNA pocket. The active-site Proton acceptor is His-19. 3 residues coordinate tRNA: Phe-64, Asn-66, and Asn-112. A disordered region spans residues Met-192–Asp-250. Positions His-219–Lys-229 are enriched in polar residues. Over residues Met-241 to Asp-250 the composition is skewed to basic and acidic residues.

Belongs to the PTH family. As to quaternary structure, monomer.

It is found in the cytoplasm. It catalyses the reaction an N-acyl-L-alpha-aminoacyl-tRNA + H2O = an N-acyl-L-amino acid + a tRNA + H(+). Functionally, hydrolyzes ribosome-free peptidyl-tRNAs (with 1 or more amino acids incorporated), which drop off the ribosome during protein synthesis, or as a result of ribosome stalling. In terms of biological role, catalyzes the release of premature peptidyl moieties from peptidyl-tRNA molecules trapped in stalled 50S ribosomal subunits, and thus maintains levels of free tRNAs and 50S ribosomes. This Brucella canis (strain ATCC 23365 / NCTC 10854 / RM-666) protein is Peptidyl-tRNA hydrolase.